A 148-amino-acid polypeptide reads, in one-letter code: Endoribonuclease YbeY (148 aa).

Positions 113, 117, and 123 each coordinate Zn(2+).

The protein belongs to the endoribonuclease YbeY family. The cofactor is Zn(2+).

It localises to the cytoplasm. Its function is as follows. Single strand-specific metallo-endoribonuclease involved in late-stage 70S ribosome quality control and in maturation of the 3' terminus of the 16S rRNA. In Borrelia hermsii (strain HS1 / DAH), this protein is Endoribonuclease YbeY.